A 417-amino-acid chain; its full sequence is Dihydrolipoyllysine-residue succinyltransferase component of 2-oxoglutarate dehydrogenase complex (417 aa).

The region spanning 1-76 (MAEIKVPELA…QVGEIIGTIS (76 aa)) is the Lipoyl-binding domain. Lysine 42 bears the N6-lipoyllysine mark. The interval 75 to 191 (ISEGAGESSA…SFDKPVEVQK (117 aa)) is disordered. 2 stretches are compositionally biased toward basic and acidic residues: residues 89–103 (EKTESKESVKEEKQA) and 152–163 (RKQDVEAYEKPA). The region spanning 123–160 (IASPSARKLAREKGIDLSQVPTGDPLGRVRKQDVEAYE) is the Peripheral subunit-binding (PSBD) domain. Residues 164–182 (SKPAPQQKQQPQAQKAQQS) show a composition bias toward low complexity. Residues histidine 388 and aspartate 392 contribute to the active site.

The protein belongs to the 2-oxoacid dehydrogenase family. In terms of assembly, forms a 24-polypeptide structural core with octahedral symmetry. Part of the 2-oxoglutarate dehydrogenase (OGDH) complex composed of E1 (2-oxoglutarate dehydrogenase), E2 (dihydrolipoamide succinyltransferase) and E3 (dihydrolipoamide dehydrogenase); the complex contains multiple copies of the three enzymatic components (E1, E2 and E3). (R)-lipoate serves as cofactor.

The enzyme catalyses N(6)-[(R)-dihydrolipoyl]-L-lysyl-[protein] + succinyl-CoA = N(6)-[(R)-S(8)-succinyldihydrolipoyl]-L-lysyl-[protein] + CoA. Its pathway is amino-acid degradation; L-lysine degradation via saccharopine pathway; glutaryl-CoA from L-lysine: step 6/6. Its function is as follows. E2 component of the 2-oxoglutarate dehydrogenase (OGDH) complex which catalyzes the second step in the conversion of 2-oxoglutarate to succinyl-CoA and CO(2). The polypeptide is Dihydrolipoyllysine-residue succinyltransferase component of 2-oxoglutarate dehydrogenase complex (odhB) (Bacillus subtilis (strain 168)).